The following is a 290-amino-acid chain: Protein EURL homolog (290 aa).

Positions Ser185–Gln206 are disordered. Positions Ala228–Leu251 form a coiled coil.

Belongs to the EURL family. As to quaternary structure, interacts with CCDC85B. Expressed in brain (at protein level). Expressed in neural progenitor cells and postmitotic neurons of the embryonic cerebral cortex.

In terms of biological role, plays a role in cortical progenitor cell proliferation and differentiation. Promotes dendritic spine development of post-migratory cortical projection neurons by modulating the beta-catenin signaling pathway. In Mus musculus (Mouse), this protein is Protein EURL homolog.